Consider the following 222-residue polypeptide: Deoxyribose-phosphate aldolase (222 aa).

The active-site Proton donor/acceptor is the aspartate 90. Catalysis depends on lysine 152, which acts as the Schiff-base intermediate with acetaldehyde. Lysine 181 functions as the Proton donor/acceptor in the catalytic mechanism.

Belongs to the DeoC/FbaB aldolase family. DeoC type 1 subfamily.

It is found in the cytoplasm. The enzyme catalyses 2-deoxy-D-ribose 5-phosphate = D-glyceraldehyde 3-phosphate + acetaldehyde. It functions in the pathway carbohydrate degradation; 2-deoxy-D-ribose 1-phosphate degradation; D-glyceraldehyde 3-phosphate and acetaldehyde from 2-deoxy-alpha-D-ribose 1-phosphate: step 2/2. Its function is as follows. Catalyzes a reversible aldol reaction between acetaldehyde and D-glyceraldehyde 3-phosphate to generate 2-deoxy-D-ribose 5-phosphate. This is Deoxyribose-phosphate aldolase from Pectobacterium atrosepticum (strain SCRI 1043 / ATCC BAA-672) (Erwinia carotovora subsp. atroseptica).